The sequence spans 201 residues: Ribonuclease MRP protein subunit RMP1 (201 aa).

A helical membrane pass occupies residues 86–108 (YWQFNGVIALGQFVTLGCTLVTL).

In terms of assembly, component of RNase MRP complex which consists of an RNA moiety and at least 10 protein subunits including POP1, POP3, POP4, POP5, POP6, POP7, POP8, RMP1, RPP1 and SNM1, many of which are shared with the RNase P complex.

The protein localises to the membrane. It localises to the cytoplasm. It is found in the nucleus. Functionally, functions as part of ribonuclease MRP (RNase MRP), which is involved in rRNA processing in mitochondria. This Saccharomyces cerevisiae (strain ATCC 204508 / S288c) (Baker's yeast) protein is Ribonuclease MRP protein subunit RMP1.